The primary structure comprises 187 residues: MVEALILGWNPEYEPLKGWILNAAVTTKIFIDIFIGVWAFILAVVWVYWIERRPGEKVEKVEIWYRFPKFVIGYFLTFVIVAWLTSAAINAYAASLGVSVSELTTEQFKAAYAPFSAAVNEMNSLRRIFFALTFFSIGVISDFSVLRKEGLGRLALVYFVCLFGFIIWIGLAISYLFFHDVHLLFLK.

4 consecutive transmembrane segments (helical) span residues 29-50 (IFID…VYWI), 70-92 (FVIG…INAY), 128-147 (IFFA…SVLR), and 154-176 (LALV…ISYL).

It localises to the cell membrane. This is an uncharacterized protein from Archaeoglobus fulgidus (strain ATCC 49558 / DSM 4304 / JCM 9628 / NBRC 100126 / VC-16).